Consider the following 984-residue polypeptide: Pre-mRNA-splicing factor cwf10 (984 aa).

A disordered region spans residues 1 to 28; that stretch reads MMEEDLYDEFGNYIGPENEEDEEELFPQ. The region spanning 139–402 is the tr-type G domain; the sequence is DDVRSFIVAG…HTLTISDEAE (264 aa). Residues 148 to 155 form a G1 region; sequence GHLHHGKS. 148–155 is a binding site for GTP; that stretch reads GHLHHGKS. The interval 190–194 is G2; that stretch reads VMSIK. The tract at residues 216–219 is G3; that stretch reads DTPG. GTP-binding positions include 216–220 and 270–273; these read DTPGH and NKVD. Positions 270–273 are G4; that stretch reads NKVD. The segment at 371-373 is G5; that stretch reads QSL.

This sequence belongs to the TRAFAC class translation factor GTPase superfamily. Classic translation factor GTPase family. EF-G/EF-2 subfamily. In terms of assembly, belongs to the 40S cdc5-associated complex (or cwf complex), a spliceosome sub-complex reminiscent of a late-stage spliceosome composed of the U2, U5 and U6 snRNAs and at least brr2, cdc5, cwf2/prp3, cwf3/syf1, cwf4/syf3, cwf5/ecm2, spp42/cwf6, cwf7/spf27, cwf8, cwf9, cwf10, cwf11, cwf12, prp45/cwf13, cwf14, cwf15, cwf16, cwf17, cwf18, cwf19, cwf20, cwf21, cwf22, cwf23, cwf24, cwf25, cwf26, cyp7/cwf27, cwf28, cwf29/ist3, lea1, msl1, prp5/cwf1, prp10, prp12/sap130, prp17, prp22, sap61, sap62, sap114, sap145, slu7, smb1, smd1, smd3, smf1, smg1 and syf2.

It is found in the cytoplasm. It localises to the nucleus. Functionally, component of the U5 snRNP complex required for pre-mRNA splicing. Binds GTP. The chain is Pre-mRNA-splicing factor cwf10 (cwf10) from Schizosaccharomyces pombe (strain 972 / ATCC 24843) (Fission yeast).